The sequence spans 906 residues: Glutamate receptor 1 (906 aa).

An N-terminal signal peptide occupies residues Met-1–Gly-18. Over Ala-19–Ala-536 the chain is Extracellular. Residues Asn-63, Asn-249, Asn-257, Asn-363, Asn-401, and Asn-406 are each glycosylated (N-linked (GlcNAc...) asparagine). Cys-75 and Cys-323 are oxidised to a cystine. L-glutamate is bound by residues Pro-492, Thr-494, and Arg-499. Residues Tyr-537–Val-557 traverse the membrane as a helical segment. Residues Ser-558–Glu-584 lie on the Cytoplasmic side of the membrane. An intramembrane region (helical; Pore-forming) is located at residues Phe-585–Gln-600. An intramembrane segment occupies Gln-601–Cys-603. Cys-603 is lipidated: S-palmitoyl cysteine. At Asp-604–Ser-609 the chain is on the cytoplasmic side. Residues Leu-610–Tyr-630 form a helical membrane-spanning segment. The Extracellular segment spans residues Thr-631–Asn-805. Residue Ser-645 is modified to Phosphoserine. The L-glutamate site is built by Ser-668 and Thr-669. Position 710 is a phosphoserine (Ser-710). Glu-719 provides a ligand contact to L-glutamate. An intrachain disulfide couples Cys-732 to Cys-787. Residues Val-806–Ile-826 form a helical membrane-spanning segment. Residues Glu-827 to Leu-906 are Cytoplasmic-facing. Cys-829 carries the S-palmitoyl cysteine lipid modification. Phosphoserine occurs at positions 849 and 863. A disordered region spans residues Arg-861–Ser-880. A compositionally biased stretch (low complexity) spans Ser-863–Ser-872. The PDZ-binding signature appears at Ala-903–Leu-906.

Belongs to the glutamate-gated ion channel (TC 1.A.10.1) family. GRIA1 subfamily. As to quaternary structure, homotetramer or heterotetramer of pore-forming glutamate receptor subunits; heteromeric assembly can be the result of both receptor subtype and flip-flop forms and according the composition, one partner can be dominant with respect to the fast desensitizing current component, whereas the other can determine the steady-state component. Tetramers may be formed by the dimerization of dimers. Found in a complex with GRIA2, GRIA3, GRIA4, CNIH2, CNIH3, CACNG2, CACNG3, CACNG4, CACNG5, CACNG7 and CACNG8. Interacts with HIP1 and RASGRF2. Interacts with SYNDIG1 and GRIA2. Interacts with DLG1 (via C-terminus). Interacts with LRFN1. Interacts with PRKG2. Interacts with CNIH2 and CACNG2. Interacts with CACNG5; this interaction modulates the gating. Interacts (via C-terminus) with PDLIM4 (via LIM domain); this interaction as well as the interaction of PDLIM4 with alpha-actinin is required for their colocalization in early endosomes. Interacts with SNX27 (via PDZ domain); the interaction is required for recycling to the plasma membrane when endocytosed and prevent degradation in lysosomes. Interacts (via PDZ-binding motif) with SHANK3 (via PDZ domain). Interacts with CACNG3; associates GRIA1 with the adapter protein complex 4 (AP-4) to target GRIA1 to the somatodendritic compartment of neurons. Interacts with CACNG2; this interaction mediates traffick to the plasma membrane and modulation of desensitization. Interaction with CNIH2 and CNIH3; this interaction promotes expression at the plasma membrane and extensively modulates their gating properties by slowing deactivation and desensitization kinetics. Found in a complex with GRIA2, GRIA3, GRIA4, DLG4, CACNG8 and CNIH2. Phosphorylated at Ser-645. Phosphorylated at Ser-710 by PKC. Phosphorylated at Ser-849 by PKC, PKA and CAMK2. Phosphorylated at Ser-863 by PKC, PKA and PRKG2. Phosphorylation of Ser-863 is reduced by induction of long-term depression and increased by induction of long-term potentiation. Post-translationally, palmitoylated. Depalmitoylated by CPT1C and upon L-glutamate stimulation. ZDHHC3/GODZ specifically palmitoylates Cys-603, which leads to Golgi retention and decreased cell surface expression. In contrast, Cys-829 palmitoylation does not affect cell surface expression but regulates stimulation-dependent endocytosis.

The protein resides in the cell membrane. Its subcellular location is the endoplasmic reticulum membrane. The protein localises to the postsynaptic cell membrane. It localises to the postsynaptic density membrane. It is found in the cell projection. The protein resides in the dendrite. Its subcellular location is the dendritic spine. The protein localises to the early endosome membrane. It localises to the recycling endosome membrane. It is found in the presynapse. The protein resides in the synapse. The catalysed reaction is Ca(2+)(in) = Ca(2+)(out). The enzyme catalyses Na(+)(in) = Na(+)(out). It catalyses the reaction Mg(2+)(in) = Mg(2+)(out). It carries out the reaction Li(+)(in) = Li(+)(out). The catalysed reaction is K(+)(in) = K(+)(out). The enzyme catalyses Sr(2+)(in) = Sr(2+)(out). In terms of biological role, ionotropic glutamate receptor that functions as a ligand-gated cation channel, gated by L-glutamate and glutamatergic agonists such as alpha-amino-3-hydroxy-5-methyl-4-isoxazolepropionic acid (AMPA), quisqualic acid, and kainic acid. L-glutamate acts as an excitatory neurotransmitter at many synapses in the central nervous system. Binding of the excitatory neurotransmitter L-glutamate induces a conformation change, leading to the opening of the cation channel, and thereby converts the chemical signal to an electrical impulse upon entry of monovalent and divalent cations such as sodium and calcium. The receptor then desensitizes rapidly and enters in a transient inactive state, characterized by the presence of bound agonist. In the presence of CACNG2 or CACNG4 or CACNG7 or CACNG8, shows resensitization which is characterized by a delayed accumulation of current flux upon continued application of L-glutamate. Calcium (Ca(2+)) permeability depends on subunits composition and, heteromeric channels containing edited GRIA2 subunit are calcium-impermeable. Also permeable to other divalents cations such as strontium(2+) and magnesium(2+) and monovalent cations such as potassium(1+) and lithium(1+). The protein is Glutamate receptor 1 of Macaca fascicularis (Crab-eating macaque).